The following is a 245-amino-acid chain: Suppressor of aph-1 (245 aa).

Positions 12-60 (DTKWHYLGPDSEKYGPYMSKDMLFWLQAGYFNDGLQLKTENEPNYHTLG) constitute a GYF domain. Residues 126-166 (NQNGPPMGAQMHSQPPSEPIDAGSLSHTPDSENETRLNEQT) form a disordered region.

In terms of biological role, involved in negative regulation of early and late embryonic Notch signaling. The protein is Suppressor of aph-1 of Caenorhabditis elegans.